A 209-amino-acid polypeptide reads, in one-letter code: MALRDIKPTRSELINLKRKIQLSQRGYKILKMKRDGLIMEFFKILSEAKDSRGELLRRYKHAVEMMAVANTVEGALGVKAAAFSVKETPEITLKSKNIMGVVVPEIESSKVKKTLADRGYGVLGTSPVIDETASSFEDLVEAIIESAEIETTMKRLLDEIEKTKRRVNALEFKVIPELTEARDFIKMRLDEMEREELFRMKKIKARGSS.

It belongs to the V-ATPase D subunit family. As to quaternary structure, has multiple subunits with at least A(3), B(3), C, D, E, F, H, I and proteolipid K(x).

It localises to the cell membrane. In terms of biological role, component of the A-type ATP synthase that produces ATP from ADP in the presence of a proton gradient across the membrane. In Methanoregula boonei (strain DSM 21154 / JCM 14090 / 6A8), this protein is A-type ATP synthase subunit D.